The sequence spans 167 residues: Small ribosomal subunit protein uS5 (167 aa).

The S5 DRBM domain occupies 12–75 (LEERVVTINR…EDAKKNMVFV (64 aa)).

The protein belongs to the universal ribosomal protein uS5 family. As to quaternary structure, part of the 30S ribosomal subunit. Contacts proteins S4 and S8.

With S4 and S12 plays an important role in translational accuracy. Functionally, located at the back of the 30S subunit body where it stabilizes the conformation of the head with respect to the body. This is Small ribosomal subunit protein uS5 from Listeria innocua serovar 6a (strain ATCC BAA-680 / CLIP 11262).